A 313-amino-acid polypeptide reads, in one-letter code: MFNNPDFSDIATCDLEEPKNSIKIEREQVKLEKRLCREVGRAITDFNMIEEGDKIMVCMSGGKDSYTMLDVLRKLQKRAPVKFELVAVNLDQKQPGFPDHVLPEYFKSIGVDYHIETQDTYSVVKRVVPEGKTTCGLCSRLRRAILYKVADELGCTKVALGHHRDDIVQTLMLNMFYGGRMKGMPPKLVSDDGKHVVIRPLCYVPEKDTVRWAQYQNFPIIPCNLCGSQDGLQRVAVGELLREWDKKFPGRVESMFRAMGHIVTTHMMDPELHDFKNAKATGIADPNGDMAFDHEEMPVSASLPGLQVVQLSS.

The PP-loop motif signature appears at 60–65 (SGGKDS). The [4Fe-4S] cluster site is built by Cys-135, Cys-138, and Cys-226.

Belongs to the TtcA family. In terms of assembly, homodimer. Mg(2+) is required as a cofactor. It depends on [4Fe-4S] cluster as a cofactor.

It is found in the cytoplasm. It carries out the reaction cytidine(32) in tRNA + S-sulfanyl-L-cysteinyl-[cysteine desulfurase] + AH2 + ATP = 2-thiocytidine(32) in tRNA + L-cysteinyl-[cysteine desulfurase] + A + AMP + diphosphate + H(+). It functions in the pathway tRNA modification. Its function is as follows. Catalyzes the ATP-dependent 2-thiolation of cytidine in position 32 of tRNA, to form 2-thiocytidine (s(2)C32). The sulfur atoms are provided by the cysteine/cysteine desulfurase (IscS) system. The chain is tRNA-cytidine(32) 2-sulfurtransferase from Delftia acidovorans (strain DSM 14801 / SPH-1).